A 257-amino-acid chain; its full sequence is MWQLLSPTALLLLVSVPGTHAEDPPKSVVILDPPWDRLLEKDSVTLKCQGAYPPRDDSTEWRWNGTLISNKASSYSITDATVGNSGEYTCKTGLSAQSDPLRLEVYKGWLLLQAPRWVVQEGESIRLRCHTWKNITIQKVQYFQNGMGKKFSHQNFEYHIPNATLKDGGSYFCRGIIKNYDLSSEPVKVTVQGSKSPSPILSFFLPWHQIIFCLVMGFLFAVDTGLYFSVRKVLRSSKEDWRNGKVTWSRDPADKGG.

Residues Met1 to Thr19 form the signal peptide. Over His20–Gln209 the chain is Extracellular. 2 Ig-like C2-type domains span residues Pro25 to Glu104 and Gly108 to Thr190. 2 disulfide bridges follow: Cys48/Cys90 and Cys129/Cys173. N-linked (GlcNAc...) asparagine glycans are attached at residues Asn64, Asn134, and Asn162. An N-linked (GlcNAc...) asparagine; in variant N-181 glycan is attached at Asp181. The helical transmembrane segment at Ile210–Val230 threads the bilayer. The Cytoplasmic portion of the chain corresponds to Arg231–Gly257.

In terms of assembly, forms a heterooligomeric complex with ITAM-containing signaling subunits FCER1G. Interacts (via transmembrane domain) with signaling subunits; this interaction is a prerequisite for receptor complex expression on the cell surface and intracellular signal transduction. Binds the Fc region of antigen-complexed IgG. As to expression, expressed in polymorphonuclear leukocytes, pulmonary alveolar macrophages and peripheral blood mononuclear cells (at protein level). Found in spleen, and at very low levels in lymph nodes but not in thymus or liver.

The protein resides in the cell membrane. Functionally, receptor for the invariable Fc fragment of immunoglobulin gamma (IgG). Optimally activated upon binding of clustered antigen-IgG complexes displayed on cell surfaces, triggers lysis of antibody-coated cells, a process known as antibody-dependent cellular cytotoxicity (ADCC). Does not bind free monomeric IgG, thus avoiding inappropriate effector cell activation in the absence of antigenic trigger. Mediates IgG effector functions on natural killer (NK) cells. Binds antigen-IgG complexes generated upon infection and triggers NK cell-dependent cytokine production and degranulation to limit viral load and propagation. Fc-binding subunit that associates with FCER1G adapter to form functional signaling complexes. Following the engagement of antigen-IgG complexes, triggers phosphorylation of immunoreceptor tyrosine-based activation motif (ITAM)-containing adapter with subsequent activation of phosphatidylinositol 3-kinase signaling and sustained elevation of intracellular calcium that ultimately drive NK cell activation. Mediates enhanced ADCC in response to afucosylated IgGs. The chain is Low affinity immunoglobulin gamma Fc region receptor III-A from Sus scrofa (Pig).